A 105-amino-acid polypeptide reads, in one-letter code: Large ribosomal subunit protein uL24 (105 aa).

This sequence belongs to the universal ribosomal protein uL24 family. Part of the 50S ribosomal subunit.

Its function is as follows. One of two assembly initiator proteins, it binds directly to the 5'-end of the 23S rRNA, where it nucleates assembly of the 50S subunit. In terms of biological role, one of the proteins that surrounds the polypeptide exit tunnel on the outside of the subunit. The chain is Large ribosomal subunit protein uL24 from Thermotoga petrophila (strain ATCC BAA-488 / DSM 13995 / JCM 10881 / RKU-1).